An 875-amino-acid chain; its full sequence is Phosphoenolpyruvate carboxylase (875 aa).

Catalysis depends on residues His-137 and Lys-542.

Belongs to the PEPCase type 1 family. Mg(2+) is required as a cofactor.

The enzyme catalyses oxaloacetate + phosphate = phosphoenolpyruvate + hydrogencarbonate. Forms oxaloacetate, a four-carbon dicarboxylic acid source for the tricarboxylic acid cycle. This is Phosphoenolpyruvate carboxylase from Pseudomonas putida (strain GB-1).